Consider the following 491-residue polypeptide: Ribulose-1,5 bisphosphate carboxylase/oxygenase large subunit N-methyltransferase, chloroplastic (491 aa).

The region spanning 67 to 291 is the SET domain; sequence EGVVTTKTPV…AGDQLFIQYD (225 aa).

This sequence belongs to the class V-like SAM-binding methyltransferase superfamily. Plant protein-lysine LSMT methyltransferase family.

It localises to the plastid. The protein localises to the chloroplast. The enzyme catalyses L-lysyl-[ribulose-1,5-bisphosphate carboxylase] + 3 S-adenosyl-L-methionine = N(6),N(6),N(6)-trimethyl-L-lysyl-[ribulose-1,5-bisphosphate carboxylase] + 3 S-adenosyl-L-homocysteine + 3 H(+). In terms of biological role, methylates 'Lys-14' of the large subunit of RuBisCO. This is Ribulose-1,5 bisphosphate carboxylase/oxygenase large subunit N-methyltransferase, chloroplastic (RBCMT) from Nicotiana tabacum (Common tobacco).